Here is a 299-residue protein sequence, read N- to C-terminus: tRNA dimethylallyltransferase (299 aa).

Position 11–18 (11–18 (GPTAVGKT)) interacts with ATP. 13-18 (TAVGKT) contributes to the substrate binding site. Residues 36–39 (DSQQ) are interaction with substrate tRNA.

Belongs to the IPP transferase family. In terms of assembly, monomer. The cofactor is Mg(2+).

The catalysed reaction is adenosine(37) in tRNA + dimethylallyl diphosphate = N(6)-dimethylallyladenosine(37) in tRNA + diphosphate. Functionally, catalyzes the transfer of a dimethylallyl group onto the adenine at position 37 in tRNAs that read codons beginning with uridine, leading to the formation of N6-(dimethylallyl)adenosine (i(6)A). The protein is tRNA dimethylallyltransferase of Streptococcus pyogenes serotype M28 (strain MGAS6180).